The primary structure comprises 395 residues: Protein-arginine rhamnosyltransferase (395 aa).

Residues 19–22 (NYGD), Tyr205, Gln272, and 288–292 (RGEDS) contribute to the dTDP-beta-L-rhamnose site. The Proton acceptor role is filled by Asp22. The active site involves Glu290.

It belongs to the glycosyltransferase 104 family.

The enzyme catalyses dTDP-beta-L-rhamnose + L-arginyl-[protein] = N(omega)-(alpha-L-rhamnosyl)-L-arginyl-[protein] + dTDP + H(+). Protein-arginine rhamnosyltransferase that catalyzes the transfer of a single rhamnose to elongation factor P (EF-P) on 'Lys-32', a modification required for EF-P-dependent rescue of polyproline stalled ribosomes. This Shewanella oneidensis (strain ATCC 700550 / JCM 31522 / CIP 106686 / LMG 19005 / NCIMB 14063 / MR-1) protein is Protein-arginine rhamnosyltransferase.